Here is a 452-residue protein sequence, read N- to C-terminus: Probable receptor-like protein kinase At5g20050 (452 aa).

Residues 1-23 (MEDKKANIIATILILALVVVIIA) form the signal peptide. Residues 24 to 33 (ARVSLKLSKT) are Extracellular-facing. The chain crosses the membrane as a helical span at residues 34-54 (FYLIAGVDISLILAVICFLII). Topologically, residues 55 to 452 (RSRYNKERKL…SSIISPISPR (398 aa)) are cytoplasmic. The Protein kinase domain maps to 103–392 (DGFRSLIGKG…MVIEMLEGRV (290 aa)). ATP-binding positions include 109–117 (IGKGGSGSV) and Lys131. Tyr178 bears the Phosphotyrosine mark. The Proton acceptor role is filled by Asp236. Thr270 and Thr275 each carry phosphothreonine.

Belongs to the protein kinase superfamily. Ser/Thr protein kinase family.

It is found in the membrane. The enzyme catalyses L-seryl-[protein] + ATP = O-phospho-L-seryl-[protein] + ADP + H(+). The catalysed reaction is L-threonyl-[protein] + ATP = O-phospho-L-threonyl-[protein] + ADP + H(+). The polypeptide is Probable receptor-like protein kinase At5g20050 (Arabidopsis thaliana (Mouse-ear cress)).